Consider the following 141-residue polypeptide: Mitochondrial import inner membrane translocase subunit tim16 (141 aa).

Positions 59–117 are J-like; it reads EACKILNVNKPADGTAANMEEVMERFKRLFDANDPEKGGSFYLQSKVVRARERLEAEIK. Residues 119–141 form a disordered region; it reads KMEEKQAEEEVKEGWNPKIYKDR.

Belongs to the TIM16/PAM16 family. Heterodimer with tim14/pam18. Component of the PAM complex, at least composed of hsp70-5/ssc1, grpe/mge1, tim44, un-4/pam16, pam17 and tim14/pam18.

The protein localises to the mitochondrion inner membrane. Its function is as follows. Essential component of the PAM complex, a complex required for the translocation of transit peptide-containing proteins from the inner membrane into the mitochondrial matrix in an ATP-dependent manner. In the complex, it is required to regulate activity of mtHSP70 (hsp70-5) via its interaction with tim14/pam18. May act by positioning tim14/pam18 in juxtaposition to mtHSP70 at the translocon to maximize ATPase stimulation. The polypeptide is Mitochondrial import inner membrane translocase subunit tim16 (un-4) (Neurospora crassa (strain ATCC 24698 / 74-OR23-1A / CBS 708.71 / DSM 1257 / FGSC 987)).